Here is a 364-residue protein sequence, read N- to C-terminus: UDP-N-acetylglucosamine--N-acetylmuramyl-(pentapeptide) pyrophosphoryl-undecaprenol N-acetylglucosamine transferase 1 (364 aa).

UDP-N-acetyl-alpha-D-glucosamine contacts are provided by residues T10–G12, N124, S195, I250, and Q295.

Belongs to the glycosyltransferase 28 family. MurG subfamily.

The protein resides in the cell membrane. The enzyme catalyses di-trans,octa-cis-undecaprenyl diphospho-N-acetyl-alpha-D-muramoyl-L-alanyl-D-glutamyl-meso-2,6-diaminopimeloyl-D-alanyl-D-alanine + UDP-N-acetyl-alpha-D-glucosamine = di-trans,octa-cis-undecaprenyl diphospho-[N-acetyl-alpha-D-glucosaminyl-(1-&gt;4)]-N-acetyl-alpha-D-muramoyl-L-alanyl-D-glutamyl-meso-2,6-diaminopimeloyl-D-alanyl-D-alanine + UDP + H(+). It functions in the pathway cell wall biogenesis; peptidoglycan biosynthesis. In terms of biological role, cell wall formation. Catalyzes the transfer of a GlcNAc subunit on undecaprenyl-pyrophosphoryl-MurNAc-pentapeptide (lipid intermediate I) to form undecaprenyl-pyrophosphoryl-MurNAc-(pentapeptide)GlcNAc (lipid intermediate II). The polypeptide is UDP-N-acetylglucosamine--N-acetylmuramyl-(pentapeptide) pyrophosphoryl-undecaprenol N-acetylglucosamine transferase 1 (Bacillus anthracis).